The primary structure comprises 1071 residues: ATP-dependent helicase/deoxyribonuclease subunit B (1071 aa).

Belongs to the helicase family. AddB/RexB type 2 subfamily. As to quaternary structure, heterodimer of AddA and RexB. The cofactor is Mg(2+).

Functionally, the heterodimer acts as both an ATP-dependent DNA helicase and an ATP-dependent, dual-direction single-stranded exonuclease. Recognizes the chi site generating a DNA molecule suitable for the initiation of homologous recombination. This subunit has 5' -&gt; 3' nuclease activity but not helicase activity. This is ATP-dependent helicase/deoxyribonuclease subunit B from Streptococcus pyogenes serotype M12 (strain MGAS2096).